A 278-amino-acid chain; its full sequence is Rhamnulose-1-phosphate aldolase (278 aa).

The active site involves glutamate 116. 3 residues coordinate Zn(2+): histidine 139, histidine 141, and histidine 210.

It belongs to the aldolase class II family. RhaD subfamily. Zn(2+) is required as a cofactor.

The protein resides in the cytoplasm. The enzyme catalyses L-rhamnulose 1-phosphate = (S)-lactaldehyde + dihydroxyacetone phosphate. It participates in carbohydrate degradation; L-rhamnose degradation; glycerone phosphate from L-rhamnose: step 3/3. Catalyzes the reversible cleavage of L-rhamnulose-1-phosphate to dihydroxyacetone phosphate (DHAP) and L-lactaldehyde. The protein is Rhamnulose-1-phosphate aldolase of Listeria welshimeri serovar 6b (strain ATCC 35897 / DSM 20650 / CCUG 15529 / CIP 8149 / NCTC 11857 / SLCC 5334 / V8).